A 158-amino-acid polypeptide reads, in one-letter code: Trafficking protein particle complex subunit 6B (158 aa).

The protein belongs to the TRAPP small subunits family. BET3 subfamily. In terms of assembly, homodimer. Part of a TRAPP complex. Heterodimer with TRAPPC3. The heterodimer TRAPPC6B-TRAPPC3 interacts with TRAPPC1 likely providing a core for TRAPP complex formation.

The protein resides in the golgi apparatus. Its subcellular location is the cis-Golgi network. It localises to the endoplasmic reticulum. In terms of biological role, component of a transport protein particle (TRAPP) complex that may function in specific stages of inter-organelle traffic. Specifically involved in the early development of neural circuitry, likely by controlling the frequency and amplitude of intracellular calcium transients implicated in the regulation of neuron differentiation and survival. The protein is Trafficking protein particle complex subunit 6B of Bos taurus (Bovine).